Consider the following 138-residue polypeptide: Acidic phospholipase A2 inhibitor chain HPD-1I (138 aa).

A signal peptide spans Met-1 to Gly-16. Cystine bridges form between Cys-42–Cys-131, Cys-44–Cys-60, Cys-59–Cys-111, Cys-65–Cys-138, Cys-66–Cys-104, Cys-73–Cys-97, and Cys-91–Cys-102.

In terms of assembly, heterodimer of an acidic and a basic chain; non-covalently linked. The basic chain is toxic and has phospholipase A2 activity (chain HDP-1P (AC Q1RP79) or HDP-2P (AC Q1RP78)) and the acidic chain is non-toxic and functions as its inhibitor (chain HPD-1I). In terms of tissue distribution, expressed by the venom gland.

It localises to the secreted. In terms of biological role, heterodimer: slightly affects neuromuscular transmission acting presynaptically. It has a low catalytic activity, a low anticoagulant activity and weakly inhibits ADP-induced platelet aggregation. Its function is as follows. Monomer: has no activity (neurotoxic, catalytic, anticoagulant and a ADP-induced platelet aggregation), but inhibits phospholipase A2. This is Acidic phospholipase A2 inhibitor chain HPD-1I from Vipera nikolskii (Nikolsky's adder).